The chain runs to 1028 residues: SWI/SNF-related matrix-associated actin-dependent regulator of chromatin subfamily A containing DEAD/H box 1 (1028 aa).

The residue at position 1 (Met-1) is an N-acetylmethionine. The tract at residues 13–81 (KRNKIEEAPE…PENDRKASIS (69 aa)) is disordered. Residue Thr-54 is modified to Phosphothreonine. Residue Ser-57 is modified to Phosphoserine. Thr-71 bears the Phosphothreonine mark. A Glycyl lysine isopeptide (Lys-Gly) (interchain with G-Cter in SUMO2) cross-link involves residue Lys-77. Position 79 is a phosphoserine (Ser-79). Lys-84 participates in a covalent cross-link: Glycyl lysine isopeptide (Lys-Gly) (interchain with G-Cter in SUMO2). 4 positions are modified to phosphoserine: Ser-124, Ser-127, Ser-132, and Ser-153. A CUE 1 domain is found at 158-200 (YSDNLSTVRQTRYSENLSSDLLKLIDSTSTMDGAIAAALLMFG). Disordered stretches follow at residues 204-253 (GGGP…NWEK) and 303-348 (ASPS…KRKK). A phosphoserine mark is found at Ser-213, Ser-216, Ser-241, and Ser-244. Residues 253–296 (KQESIVLKLQKEFPNFDKEELREVLKEHEWMYTEALESLKVFAE) enclose the CUE 2 domain. Ser-304 is subject to Phosphoserine. Glycyl lysine isopeptide (Lys-Gly) (interchain with G-Cter in SUMO2) cross-links involve residues Lys-337 and Lys-473. Positions 511–679 (ALVHKHGLNG…MSLLNFVMPH (169 aa)) constitute a Helicase ATP-binding domain. Residue 523-531 (ADEMGLGKT) participates in ATP binding. A DEGH box motif is present at residues 630 to 633 (DEGH). The short motif at 723–740 (RRVKEEVLKQLPPKKDRI) is the Nuclear localization signal element. A Glycyl lysine isopeptide (Lys-Gly) (interchain with G-Cter in SUMO2) cross-link involves residue Lys-726. A Helicase C-terminal domain is found at 860-1012 (VLGCILSELK…MTTVDEGDEG (153 aa)). Residue 899–906 (YLRLDGKT) participates in ATP binding. Lys-998 is covalently cross-linked (Glycyl lysine isopeptide (Lys-Gly) (interchain with G-Cter in SUMO2)). Residues 1007-1010 (DEGD) carry the DEAD box motif.

It belongs to the SNF2/RAD54 helicase family. Binds to DNA preferentially in the vicinity of transcriptional start sites. Interacts with MSH2 and TRIM28. Part of a complex composed of TRIM28, HDAC1, HDAC2 and EHMT2. Interacts with PCNA.

Its subcellular location is the nucleus. It localises to the chromosome. The enzyme catalyses ATP + H2O = ADP + phosphate + H(+). In terms of biological role, DNA helicase that possesses intrinsic ATP-dependent nucleosome-remodeling activity and is both required for DNA repair and heterochromatin organization. Promotes DNA end resection of double-strand breaks (DSBs) following DNA damage: probably acts by weakening histone DNA interactions in nucleosomes flanking DSBs. Required for the restoration of heterochromatin organization after replication. Acts at replication sites to facilitate the maintenance of heterochromatin by directing H3 and H4 histones deacetylation, H3 'Lys-9' trimethylation (H3K9me3) and restoration of silencing. This Bos taurus (Bovine) protein is SWI/SNF-related matrix-associated actin-dependent regulator of chromatin subfamily A containing DEAD/H box 1 (SMARCAD1).